The sequence spans 155 residues: UBA-like domain-containing protein 1 (155 aa).

A disordered region spans residues 81-155 (KASESFNSSS…KASAAMEAER (75 aa)). Positions 83-96 (SESFNSSSSPSMAT) are enriched in low complexity. Positions 112–127 (ANQQSLWTQGPSAQQT) are enriched in polar residues. The segment covering 139-155 (QQAASEQKASAAMEAER) has biased composition (low complexity).

It belongs to the UBALD family.

This is UBA-like domain-containing protein 1 (ubald1) from Danio rerio (Zebrafish).